A 146-amino-acid chain; its full sequence is Leghemoglobin Lb120-1 (146 aa).

Positions 2–146 (GFTEKQEALV…LASAIKKAMN (145 aa)) constitute a Globin domain. Nitrated tyrosine is present on residues Tyr24 and Tyr29. Ser44 is a heme b binding site. Ser44 carries the post-translational modification Phosphoserine. His61 contacts O2. Residues Lys64, His93, and Lys96 each contribute to the heme b site. Tyr134 is modified (nitrated tyrosine).

Belongs to the plant globin family. Monomer. In terms of processing, nitrated in effective nodules and particularly in hypoxic conditions; this mechanism may play a protective role in the symbiosis by buffering toxic peroxynitrite NO(2)(-). Nitration level decrease during nodule senescence. Post-translationally, phosphorylation at Ser-44 disrupts the molecular environment of its porphyrin ring oxygen binding pocket, thus leading to a reduced oxygen consumption and to the delivery of oxygen O(2) to symbiosomes. As to expression, root nodules.

Its subcellular location is the cytoplasm. The protein localises to the cytosol. The protein resides in the nucleus. Its function is as follows. Leghemoglobin that reversibly binds oxygen O(2) through a pentacoordinated heme iron. In root nodules, facilitates the diffusion of oxygen to the bacteroids while preventing the bacterial nitrogenase from being inactivated by buffering dioxygen, nitric oxide and carbon monoxide, and promoting the formation of reactive oxygen species (ROS, e.g. H(2)O(2)). This role is essential for symbiotic nitrogen fixation (SNF). This Pisum sativum (Garden pea) protein is Leghemoglobin Lb120-1.